Reading from the N-terminus, the 808-residue chain is MSHPQSPAMADLKRLEAAADRAARAIPPVWPLASSVAVNPFLGQTSESLATAGARLARVAGVAVTMPRRWFHDRISAGVISDEDLLEAWLSAPRDLRPADLAALKAAAASDTPKPRALPSIADLAADVSGVDWPGLIAERFGAWAAGYFDEGQALWAAPHGKGAFAAWQAVTTHDLTPEIAGLRGFAFHVSEAPDSALAVIARAAERLGLKQAAMDSYFHQMLMTLGGWAQYARYALWQAELAGGSDQTITDLLAIRLIWEEALWLRYAPQIAARWASVSAAHGAPIAATPDLVTDAILQEAAERAAQRALANTLAKPAIAAIADRPALQAAFCIDVRSEVFRRALESVNPKVQTLGFAGFFGLATAHRRLASDIDELRLPVLLNPALRSCAGGPDVASRDRSERVKARATRAWGRFKFAAVSSFAFVEATGPIYVGKLVTDALGLRPAPAANDPAPLLSPALDLADRTRAAAAVLRAMSLTDRFARLVVLAGHGANVVNNPHASGLQCGACGGYSGEVNARLLAALLNDTKVRAGLTPDGIAIPADTLFLAALHDTTTDAVTLYADDHPSAAHQHDISQARIWFAAAGKLARGERALRLPRAAHQGSVARRGRDWAETRPEWSLAGCKAFIAAPRTRTTGRSLDGRAFLHDYDWKQDTSFGVLELILTAPVVVASWISLQYYGSTVAPEIFGAGNKLLHNVTGGIGVVEGNGGLLRAGLPWQSVHDGASYAHDPLRLSVCIEAPREAISDVLSRHDNVRALFDNGWLHLFALDEAGRMAWRYAGDLQWSAMSPVEAADPQPRLKVAV.

Zn(2+) is bound by residues C334, D336, H494, and C509.

This sequence belongs to the inorganic carbon transporter (TC 9.A.2) DabA family. Forms a complex with DabB. Zn(2+) serves as cofactor.

Its subcellular location is the cell inner membrane. Part of an energy-coupled inorganic carbon pump. This Rhodopseudomonas palustris (strain BisB5) protein is Probable inorganic carbon transporter subunit DabA.